The chain runs to 92 residues: UPF0237 protein MA_3235 (92 aa).

The ACT domain maps to 7-81 (IITVIGSDRV…KSLGVEVKVQ (75 aa)).

Belongs to the UPF0237 family.

The polypeptide is UPF0237 protein MA_3235 (Methanosarcina acetivorans (strain ATCC 35395 / DSM 2834 / JCM 12185 / C2A)).